The primary structure comprises 104 residues: Circadian clock oscillator protein KaiB (104 aa).

This sequence belongs to the KaiB family. In terms of assembly, the KaiABC complex composition changes during the circadian cycle to control KaiC phosphorylation. Complexes KaiC(6), KaiA(2-4):KaiC(6), KaiB(6):KaiC(6) and KaiC(6):KaiB(6):KaiA(12) are among the most important forms, many form cooperatively. Undergoes a major conformational rearrangment; in the free state forms homotetramers as a dimer of dimers. When bound to the CI domain of KaiC switches to a monomeric thioredoxin-fold (KaiB(fs)). KaiB(fs) binds CikA, leading it to dephosphorylate phospho-RpaA.

Its function is as follows. Key component of the KaiABC oscillator complex, which constitutes the main circadian regulator in cyanobacteria. Complex composition changes during the circadian cycle to control KaiC phosphorylation. KaiA stimulates KaiC autophosphorylation, while KaiB sequesters KaiA, leading to KaiC autodephosphorylation. Phospho-Ser-431 KaiC accumulation triggers binding of KaiB to form the KaiB(6):KaiC(6) complex, leading to changes in output regulators CikA and SasA. KaiB switches to a thioredoxin-like fold (KaiB(fs)) when bound to KaiC. KaiB(6):KaiC(6) formation exposes a site for KaiA binding that sequesters KaiA from KaiC, making the KaiC(6):KaiB(6):KaiA(12) complex that results in KaiC autodephosphorylation. Functionally, a metamorphic protein which reversibly switches between an inactive tetrameric fold and a rare, thioredoxin-like monomeric fold (KaiB(fs)). KaiB(fs) binds phospho-KaiC, KaiA and CikA. KaiA and CikA compete for binding to KaiB(fs), and KaiB(fs) and SasA compete for binding to KaiC, thus the clock oscillator and output signal pathway are tightly coupled. The sequence is that of Circadian clock oscillator protein KaiB from Trichodesmium erythraeum (strain IMS101).